The following is a 326-amino-acid chain: ATP-dependent 6-phosphofructokinase (326 aa).

Glycine 14 lines the ATP pocket. Position 24 to 28 (24 to 28 (RAVVR)) interacts with ADP. Residues 75–76 (RF) and 105–108 (GNGS) contribute to the ATP site. A Mg(2+)-binding site is contributed by asparagine 106. Substrate is bound at residue 129–131 (TID). The active-site Proton acceptor is aspartate 131. ADP is bound at residue arginine 158. Residues arginine 166 and 173–175 (MGR) contribute to the substrate site. ADP-binding positions include 189-191 (GAE), lysine 215, and 216-218 (KSA). Residues glutamate 225, arginine 248, and 254 to 257 (HTQR) contribute to the substrate site.

This sequence belongs to the phosphofructokinase type A (PFKA) family. ATP-dependent PFK group I subfamily. Prokaryotic clade 'B1' sub-subfamily. In terms of assembly, homotetramer. Requires Mg(2+) as cofactor.

It is found in the cytoplasm. It catalyses the reaction beta-D-fructose 6-phosphate + ATP = beta-D-fructose 1,6-bisphosphate + ADP + H(+). It functions in the pathway carbohydrate degradation; glycolysis; D-glyceraldehyde 3-phosphate and glycerone phosphate from D-glucose: step 3/4. With respect to regulation, allosterically activated by ADP and other diphosphonucleosides, and allosterically inhibited by phosphoenolpyruvate. Catalyzes the phosphorylation of D-fructose 6-phosphate to fructose 1,6-bisphosphate by ATP, the first committing step of glycolysis. The protein is ATP-dependent 6-phosphofructokinase of Coxiella burnetii (strain RSA 493 / Nine Mile phase I).